Consider the following 431-residue polypeptide: Glutamate-1-semialdehyde 2,1-aminomutase (431 aa).

Lys265 is subject to N6-(pyridoxal phosphate)lysine.

Belongs to the class-III pyridoxal-phosphate-dependent aminotransferase family. HemL subfamily. As to quaternary structure, homodimer. Requires pyridoxal 5'-phosphate as cofactor.

The protein localises to the cytoplasm. The catalysed reaction is (S)-4-amino-5-oxopentanoate = 5-aminolevulinate. It functions in the pathway porphyrin-containing compound metabolism; protoporphyrin-IX biosynthesis; 5-aminolevulinate from L-glutamyl-tRNA(Glu): step 2/2. This is Glutamate-1-semialdehyde 2,1-aminomutase from Vibrio parahaemolyticus serotype O3:K6 (strain RIMD 2210633).